The primary structure comprises 858 residues: Bifunctional uridylyltransferase/uridylyl-removing enzyme (858 aa).

Residues 1–324 form a uridylyltransferase region; the sequence is MSASVAAPPP…PATSGVTRVL (324 aa). A uridylyl-removing region spans residues 325 to 681; it reads SPGRFVEKQG…ARPSPVGDAL (357 aa). In terms of domain architecture, HD spans 443-565; sequence VDQHILMVLR…VGNERRLTAL (123 aa). ACT domains follow at residues 682-761 and 790-858; these read QVLV…PEPS and ILSV…AIAV.

Belongs to the GlnD family. Requires Mg(2+) as cofactor.

The enzyme catalyses [protein-PII]-L-tyrosine + UTP = [protein-PII]-uridylyl-L-tyrosine + diphosphate. The catalysed reaction is [protein-PII]-uridylyl-L-tyrosine + H2O = [protein-PII]-L-tyrosine + UMP + H(+). Its activity is regulated as follows. Uridylyltransferase (UTase) activity is inhibited by glutamine, while glutamine activates uridylyl-removing (UR) activity. Its function is as follows. Modifies, by uridylylation and deuridylylation, the PII regulatory proteins (GlnB and homologs), in response to the nitrogen status of the cell that GlnD senses through the glutamine level. Under low glutamine levels, catalyzes the conversion of the PII proteins and UTP to PII-UMP and PPi, while under higher glutamine levels, GlnD hydrolyzes PII-UMP to PII and UMP (deuridylylation). Thus, controls uridylylation state and activity of the PII proteins, and plays an important role in the regulation of nitrogen assimilation and metabolism. This Burkholderia thailandensis (strain ATCC 700388 / DSM 13276 / CCUG 48851 / CIP 106301 / E264) protein is Bifunctional uridylyltransferase/uridylyl-removing enzyme.